Here is a 464-residue protein sequence, read N- to C-terminus: RYamide receptor (464 aa).

Residues 1–105 (MEHHNSHLLP…EDMWSSAYFK (105 aa)) lie on the Extracellular side of the membrane. Residues asparagine 49, asparagine 79, and asparagine 85 are each glycosylated (N-linked (GlcNAc...) asparagine). The helical transmembrane segment at 106-126 (IIVYMLYIPIFIFALIGNGTV) threads the bilayer. The Cytoplasmic portion of the chain corresponds to 127-148 (CYIVYSTPRMRTVTNYFIASLA). A helical membrane pass occupies residues 149–169 (IGDILMSFFCVPSSFISLFIL). The Extracellular portion of the chain corresponds to 170-189 (NYWPFGLALCHFVNYSQAVS). Asparagine 183 is a glycosylation site (N-linked (GlcNAc...) asparagine). The chain crosses the membrane as a helical span at residues 190–210 (VLVSAYTLVAISIDRYIAIMW). Topologically, residues 211–221 (PLKPRITKRYA) are cytoplasmic. A helical membrane pass occupies residues 222-242 (TFIIAGVWFIALATALPIPIV). At 243–274 (SGLDIPMSPWHTKCEKYICREMWPSRTQEYYY) the chain is on the extracellular side. The chain crosses the membrane as a helical span at residues 275–295 (TLSLFALQFVVPLGVLIFTYA). Over 296-329 (RITIRVWAKRPPGEAETNRDQRMARSKRKMVKMM) the chain is Cytoplasmic. The helical transmembrane segment at 330 to 350 (LTVVIVFTCCWLPFNILQLLL) threads the bilayer. The Extracellular portion of the chain corresponds to 351–363 (NDEEFAHWDPLPY). A helical membrane pass occupies residues 364-384 (VWFAFHWLAMSHCCYNPIIYC). The Cytoplasmic segment spans residues 385–464 (YMNARFRSGF…LSCGETSPLR (80 aa)).

The protein belongs to the G-protein coupled receptor 1 family.

It localises to the cell membrane. Receptor for the neuropeptides RYamide-1 and RYamide-2. The activity of this receptor is mediated by G proteins which activate a phosphatidyl-inositol-calcium second messenger system. RYamide signaling may suppress feeding behavior. This Drosophila melanogaster (Fruit fly) protein is RYamide receptor.